A 336-amino-acid polypeptide reads, in one-letter code: MAAKVVLDFEKPLYELEEKLSEMRVYLKSGEFDARTESREGLRGEIEALEAKVESLRKTIYKNLTRWQKVQLARHPERPYTLDYIYMMTKDFVELSGDRQFGDDKAIIGGLARLEDKDSGFSQSVMVIGHQKGRDTKSNLYRNFGMAQPEGYRKALRLMKMAEKFGKPVITLIDTPGAFPGIEAEERGQAEAIARNLYEMAGLKVPVICVIIGEGASGGAIGIGVGDRILMAENSWYSVISPESCSSILWRSWNYKEQAAEALKLTADDLLAQGIIDRIVPEPLGGAHQKPEVMASTLKSMLIEELQGLLSKDASTLVDERIAKFSSMGVWNEAEA.

The region spanning 48-308 (ALEAKVESLR…KSMLIEELQG (261 aa)) is the CoA carboxyltransferase C-terminal domain.

The protein belongs to the AccA family. Acetyl-CoA carboxylase is a heterohexamer composed of biotin carboxyl carrier protein (AccB), biotin carboxylase (AccC) and two subunits each of ACCase subunit alpha (AccA) and ACCase subunit beta (AccD).

It is found in the cytoplasm. The enzyme catalyses N(6)-carboxybiotinyl-L-lysyl-[protein] + acetyl-CoA = N(6)-biotinyl-L-lysyl-[protein] + malonyl-CoA. Its pathway is lipid metabolism; malonyl-CoA biosynthesis; malonyl-CoA from acetyl-CoA: step 1/1. Its function is as follows. Component of the acetyl coenzyme A carboxylase (ACC) complex. First, biotin carboxylase catalyzes the carboxylation of biotin on its carrier protein (BCCP) and then the CO(2) group is transferred by the carboxyltransferase to acetyl-CoA to form malonyl-CoA. The protein is Acetyl-coenzyme A carboxylase carboxyl transferase subunit alpha of Chlorobaculum parvum (strain DSM 263 / NCIMB 8327) (Chlorobium vibrioforme subsp. thiosulfatophilum).